The sequence spans 111 residues: Universal stress protein B (111 aa).

The next 2 membrane-spanning stretches (helical) occupy residues 1–21 and 90–110; these read MIST…NMAR and FILT…LMIW.

Belongs to the universal stress protein B family.

Its subcellular location is the cell inner membrane. This is Universal stress protein B from Cronobacter sakazakii (strain ATCC BAA-894) (Enterobacter sakazakii).